A 124-amino-acid polypeptide reads, in one-letter code: Small ribosomal subunit protein uS12 (124 aa).

At D89 the chain carries 3-methylthioaspartic acid.

It belongs to the universal ribosomal protein uS12 family. Part of the 30S ribosomal subunit. Contacts proteins S8 and S17. May interact with IF1 in the 30S initiation complex.

Functionally, with S4 and S5 plays an important role in translational accuracy. In terms of biological role, interacts with and stabilizes bases of the 16S rRNA that are involved in tRNA selection in the A site and with the mRNA backbone. Located at the interface of the 30S and 50S subunits, it traverses the body of the 30S subunit contacting proteins on the other side and probably holding the rRNA structure together. The combined cluster of proteins S8, S12 and S17 appears to hold together the shoulder and platform of the 30S subunit. This Vibrio cholerae serotype O1 (strain ATCC 39315 / El Tor Inaba N16961) protein is Small ribosomal subunit protein uS12.